A 702-amino-acid polypeptide reads, in one-letter code: Polyribonucleotide nucleotidyltransferase (702 aa).

Mg(2+) contacts are provided by Asp-485 and Asp-491. The KH domain occupies 552–611 (PKTSTLQIDPEKIRDVIGAGGKVINKIIADTGVKIDIKEDGLVYVSSAESEGVKEAVKII). Positions 621-689 (GEIYLGKVTK…SQGRINLSRK (69 aa)) constitute an S1 motif domain.

The protein belongs to the polyribonucleotide nucleotidyltransferase family. Mg(2+) is required as a cofactor.

The protein localises to the cytoplasm. It carries out the reaction RNA(n+1) + phosphate = RNA(n) + a ribonucleoside 5'-diphosphate. Functionally, involved in mRNA degradation. Catalyzes the phosphorolysis of single-stranded polyribonucleotides processively in the 3'- to 5'-direction. The sequence is that of Polyribonucleotide nucleotidyltransferase from Clostridium perfringens (strain 13 / Type A).